The primary structure comprises 128 residues: Glycine cleavage system H protein (128 aa).

The Lipoyl-binding domain maps to 22-104 (TVLVGITDYA…YGEGWIFRLK (83 aa)). At Lys-63 the chain carries N6-lipoyllysine.

It belongs to the GcvH family. The glycine cleavage system is composed of four proteins: P, T, L and H. It depends on (R)-lipoate as a cofactor.

The glycine cleavage system catalyzes the degradation of glycine. The H protein shuttles the methylamine group of glycine from the P protein to the T protein. This chain is Glycine cleavage system H protein, found in Thermus thermophilus (strain ATCC BAA-163 / DSM 7039 / HB27).